Reading from the N-terminus, the 161-residue chain is Ethylene-responsive transcription factor ERF070 (161 aa).

The tract at residues 1-35 (MKRIIRISFTDAEATDSSSDEDTEERGGASQTRRR) is disordered. The AP2/ERF DNA-binding region spans 78–140 (KYRGVRQRPW…IGPHAPTNFG (63 aa)).

This sequence belongs to the AP2/ERF transcription factor family. ERF subfamily.

Its subcellular location is the nucleus. Functionally, probably acts as a transcriptional activator. Binds to the GCC-box pathogenesis-related promoter element. May be involved in the regulation of gene expression by stress factors and by components of stress signal transduction pathways. In Arabidopsis thaliana (Mouse-ear cress), this protein is Ethylene-responsive transcription factor ERF070 (ERF070).